Reading from the N-terminus, the 291-residue chain is Flavin-dependent thymidylate synthase (291 aa).

In terms of domain architecture, ThyX spans 31–241; it reads GFVRVVDYMG…PMVHAAFVEY (211 aa). FAD contacts are provided by residues Ser77, 100-102, and Glu108; that span reads RHR. DUMP-binding positions include 97–100, 108–112, and Arg180; these read QWVR and EYSAR. The ThyX motif signature appears at 100-110; that stretch reads RHRTASINEYS. 196–198 serves as a coordination point for FAD; that stretch reads NLH. Arg207 is a dUMP binding site. Arg207 acts as the Involved in ionization of N3 of dUMP, leading to its activation in catalysis.

The protein belongs to the thymidylate synthase ThyX family. Homotetramer. FAD serves as cofactor.

The catalysed reaction is dUMP + (6R)-5,10-methylene-5,6,7,8-tetrahydrofolate + NADPH + H(+) = dTMP + (6S)-5,6,7,8-tetrahydrofolate + NADP(+). It participates in pyrimidine metabolism; dTTP biosynthesis. Its function is as follows. Catalyzes the reductive methylation of 2'-deoxyuridine-5'-monophosphate (dUMP) to 2'-deoxythymidine-5'-monophosphate (dTMP) while utilizing 5,10-methylenetetrahydrofolate (mTHF) as the methyl donor, and NADPH and FADH(2) as the reductant. This chain is Flavin-dependent thymidylate synthase, found in Anaplasma marginale (strain St. Maries).